The sequence spans 140 residues: Putative pre-16S rRNA nuclease (140 aa).

This sequence belongs to the YqgF nuclease family.

Its subcellular location is the cytoplasm. In terms of biological role, could be a nuclease involved in processing of the 5'-end of pre-16S rRNA. The polypeptide is Putative pre-16S rRNA nuclease (Enterococcus faecalis (strain ATCC 700802 / V583)).